A 621-amino-acid chain; its full sequence is Chaperone protein DnaK (621 aa).

Thr-175 is subject to Phosphothreonine; by autocatalysis. A compositionally biased stretch (basic and acidic residues) spans 499–516 (EAHEADDKKRKEDAETRN). 2 disordered regions span residues 499–520 (EAHEADDKKRKEDAETRNNAEN) and 583–621 (AQQGAEGAAGAADSGSANNGGDDDVVDAEVVDDDDKDNK). A compositionally biased stretch (low complexity) spans 583–602 (AQQGAEGAAGAADSGSANNG). A compositionally biased stretch (acidic residues) spans 603–621 (GDDDVVDAEVVDDDDKDNK).

Belongs to the heat shock protein 70 family.

Functionally, acts as a chaperone. The polypeptide is Chaperone protein DnaK (Bifidobacterium animalis subsp. lactis (strain AD011)).